We begin with the raw amino-acid sequence, 379 residues long: CCN family member 1 (379 aa).

Positions 1–24 (MSSSTIKTLAVAVTLLHLTRLALS) are cleaved as a signal peptide. Residues 25 to 94 (TCPAACHCPL…TALKGICRAQ (70 aa)) form the IGFBP N-terminal domain. Disulfide bonds link Cys-26–Cys-50, Cys-30–Cys-52, Cys-32–Cys-53, Cys-39–Cys-56, Cys-64–Cys-78, and Cys-70–Cys-91. The VWFC domain maps to 98–164 (RPCEYNSRIY…GQCCEEWVCD (67 aa)). A Phosphoserine modification is found at Ser-184. Residues 226 to 271 (KCIVQTTSWSQCSKSCGTGISTRVTNDNSECRLVKETRICEVRPCG) form the TSP type-1 domain. The heparin-binding stretch occupies residues 277–313 (SLKKGKKCSKTKKSPEPVRFTYAGCSSVKKYRPKYCG). 5 cysteine pairs are disulfide-bonded: Cys-284/Cys-321, Cys-301/Cys-335, Cys-312/Cys-351, Cys-315/Cys-353, and Cys-320/Cys-357. Residues 284-358 (CSKTKKSPEP…QSCKCNYNCP (75 aa)) form the CTCK domain.

The protein belongs to the CCN family. As to quaternary structure, interaction with integrins is heparin- and cell-type-dependent and promotes cell adhesion.

Its subcellular location is the secreted. Promotes cell proliferation, chemotaxis, angiogenesis and cell adhesion. Appears to play a role in wound healing by up-regulating, in skin fibroblasts, the expression of a number of genes involved in angiogenesis, inflammation and matrix remodeling including VEGA-A, VEGA-C, MMP1, MMP3, TIMP1, uPA, PAI-1 and integrins alpha-3 and alpha-5. CCN1-mediated gene regulation is dependent on heparin-binding. Down-regulates the expression of alpha-1 and alpha-2 subunits of collagen type-1. Promotes cell adhesion and adhesive signaling through integrin alpha-6/beta-1, cell migration through integrin alpha-1/beta-5 and cell proliferation through integrin alpha-v/beta-3. This Rattus norvegicus (Rat) protein is CCN family member 1.